The sequence spans 399 residues: Ectoine hydrolase (399 aa).

This sequence belongs to the peptidase M24 family.

Its subcellular location is the cytoplasm. It carries out the reaction L-ectoine + H2O = (2S)-2-acetamido-4-aminobutanoate. Its function is as follows. Involved in the degradation of ectoine, which allows H.elongata to utilize ectoine as both a carbon and a nitrogen source for growth. Catalyzes the hydrolysis of ectoine to N-acetyl-L-2,4-diaminobutyric acid (N-Ac-DABA). It can produce both isoforms N-gamma-acetyl-L-2,4-diaminobutyric acid (N-gamma-Ac-DABA) and N-alpha-acetyl-L-2,4-diaminobutyric acid (-Nalpha-Ac-DABA), however N-alpha-Ac-DABA is the essential substrate for the subsequent catabolic enzyme DoeB. This chain is Ectoine hydrolase, found in Halomonas elongata (strain ATCC 33173 / DSM 2581 / NBRC 15536 / NCIMB 2198 / 1H9).